A 442-amino-acid chain; its full sequence is tRNA-2-methylthio-N(6)-dimethylallyladenosine synthase (442 aa).

Residues 3-120 form the MTTase N-terminal domain; sequence KKLYIETHGC…LPEMIDAARI (118 aa). Residues Cys-12, Cys-49, Cys-83, Cys-157, Cys-161, and Cys-164 each contribute to the [4Fe-4S] cluster site. The region spanning 143–375 is the Radical SAM core domain; that stretch reads RIDGPSAYVS…QHRLNQQGFE (233 aa). The TRAM domain occupies 378–442; sequence RQMVGSVQRI…PHSLRGSLIQ (65 aa).

The protein belongs to the methylthiotransferase family. MiaB subfamily. Monomer. It depends on [4Fe-4S] cluster as a cofactor.

It is found in the cytoplasm. The enzyme catalyses N(6)-dimethylallyladenosine(37) in tRNA + (sulfur carrier)-SH + AH2 + 2 S-adenosyl-L-methionine = 2-methylsulfanyl-N(6)-dimethylallyladenosine(37) in tRNA + (sulfur carrier)-H + 5'-deoxyadenosine + L-methionine + A + S-adenosyl-L-homocysteine + 2 H(+). In terms of biological role, catalyzes the methylthiolation of N6-(dimethylallyl)adenosine (i(6)A), leading to the formation of 2-methylthio-N6-(dimethylallyl)adenosine (ms(2)i(6)A) at position 37 in tRNAs that read codons beginning with uridine. The polypeptide is tRNA-2-methylthio-N(6)-dimethylallyladenosine synthase (Pseudomonas fluorescens (strain Pf0-1)).